The sequence spans 463 residues: ATP synthase subunit beta (463 aa).

An ATP-binding site is contributed by 153–160; it reads GGAGVGKT.

The protein belongs to the ATPase alpha/beta chains family. As to quaternary structure, F-type ATPases have 2 components, CF(1) - the catalytic core - and CF(0) - the membrane proton channel. CF(1) has five subunits: alpha(3), beta(3), gamma(1), delta(1), epsilon(1). CF(0) has three main subunits: a(1), b(2) and c(9-12). The alpha and beta chains form an alternating ring which encloses part of the gamma chain. CF(1) is attached to CF(0) by a central stalk formed by the gamma and epsilon chains, while a peripheral stalk is formed by the delta and b chains.

It localises to the cell inner membrane. The enzyme catalyses ATP + H2O + 4 H(+)(in) = ADP + phosphate + 5 H(+)(out). Functionally, produces ATP from ADP in the presence of a proton gradient across the membrane. The catalytic sites are hosted primarily by the beta subunits. This chain is ATP synthase subunit beta, found in Burkholderia cepacia (Pseudomonas cepacia).